The chain runs to 211 residues: N-(5'-phosphoribosyl)anthranilate isomerase (211 aa).

It belongs to the TrpF family.

It catalyses the reaction N-(5-phospho-beta-D-ribosyl)anthranilate = 1-(2-carboxyphenylamino)-1-deoxy-D-ribulose 5-phosphate. It functions in the pathway amino-acid biosynthesis; L-tryptophan biosynthesis; L-tryptophan from chorismate: step 3/5. This Chromohalobacter salexigens (strain ATCC BAA-138 / DSM 3043 / CIP 106854 / NCIMB 13768 / 1H11) protein is N-(5'-phosphoribosyl)anthranilate isomerase.